A 57-amino-acid chain; its full sequence is Potassium channel toxin alpha-KTx 1.5 (57 aa).

The N-terminal stretch at 1-20 (MKISFLLLALVICSIGWSEA) is a signal peptide. Gln-21 is subject to Pyrrolidone carboxylic acid. 3 disulfide bridges follow: Cys-27–Cys-48, Cys-33–Cys-53, and Cys-37–Cys-55.

The protein belongs to the short scorpion toxin superfamily. Potassium channel inhibitor family. Alpha-KTx 01 subfamily. Expressed by the venom gland.

The protein localises to the secreted. Potent blocker of both large-conductance calcium-activated potassium channels (KCa1.1/KCNMA1) and voltage-gated potassium channels (Kv1.3/KCNA3). Has also been shown to moderately inhibit Kv1.2/KCNA2 and weakly inhibit Kv1.1/KCNA1 channels, as well as 5-hydroxytryptamine 3 receptors (HTR3A). The protein is Potassium channel toxin alpha-KTx 1.5 of Olivierus martensii (Manchurian scorpion).